Reading from the N-terminus, the 292-residue chain is Putative phosphatase MPN_381 (292 aa).

Aspartate 11 serves as the catalytic Nucleophile. Residue aspartate 11 participates in Mg(2+) binding. Phosphate is bound at residue leucine 12. Aspartate 13 serves as a coordination point for Mg(2+). Residues 60–61 (TG) and lysine 217 each bind phosphate. Position 242 (aspartate 242) interacts with Mg(2+). Phosphate is bound at residue asparagine 245.

It belongs to the HAD-like hydrolase superfamily. Cof family. It depends on Mg(2+) as a cofactor.

This is Putative phosphatase MPN_381 from Mycoplasma pneumoniae (strain ATCC 29342 / M129 / Subtype 1) (Mycoplasmoides pneumoniae).